The primary structure comprises 298 residues: Protease HtpX homolog (298 aa).

2 helical membrane passes run 15-35 and 38-58; these read LIMV…GYLF and SPWT…LIMW. Histidine 143 serves as a coordination point for Zn(2+). Residue glutamate 144 is part of the active site. Zn(2+) is bound at residue histidine 147. 2 helical membrane passes run 153–173 and 197–217; these read ILLS…SGIA and IIFK…SASL. Glutamate 227 contacts Zn(2+).

Belongs to the peptidase M48B family. Zn(2+) is required as a cofactor.

It localises to the cell membrane. The sequence is that of Protease HtpX homolog from Lactobacillus acidophilus (strain ATCC 700396 / NCK56 / N2 / NCFM).